We begin with the raw amino-acid sequence, 278 residues long: DNA oxidative demethylase ALKBH2 (278 aa).

A disordered region spans residues 1-49; the sequence is MDRFLVKGAVGSLKRRMEQEQTGGGPAGLAEEEGNSKKNPRRAAPGNGV. The short motif at 3-7 is the PCNA-binding element; the sequence is RFLVK. Substrate is bound by residues 101-103 and 121-123; these read FGK and YTF. In terms of domain architecture, Fe2OG dioxygenase spans 151–256; the sequence is TFNFVLINRY…RVNLTFRKIL (106 aa). Residues N158, Y160, and H170 each coordinate 2-oxoglutarate. Residues H170 and D172 each coordinate Fe cation. D173 provides a ligand contact to substrate. Residues H235, R247, T251, and R253 each contribute to the 2-oxoglutarate site. Position 235 (H235) interacts with Fe cation.

Belongs to the alkB family. In terms of assembly, interacts with PCNA homotrimer; this interaction is enhanced during the S-phase of the cell cycle. Interacts with nucleolar proteins NCL, UBTF and NPM1. Interacts with XRCC5-XRCC6 heterodimer. Requires Fe(2+) as cofactor.

It localises to the nucleus. It is found in the nucleolus. Its subcellular location is the nucleoplasm. The catalysed reaction is a methylated nucleobase within DNA + 2-oxoglutarate + O2 = a nucleobase within DNA + formaldehyde + succinate + CO2. The enzyme catalyses an N(1)-methyl-2'-deoxyadenosine in double-stranded DNA + 2-oxoglutarate + O2 = a 2'-deoxyadenosine in double-stranded DNA + formaldehyde + succinate + CO2 + H(+). It catalyses the reaction an N(1)-methyl-2'-deoxyadenosine in single-stranded DNA + 2-oxoglutarate + O2 = a 2'-deoxyadenosine in single-stranded DNA + formaldehyde + succinate + CO2 + H(+). It carries out the reaction an N(3)-methyl-2'-deoxycytidine in double-stranded DNA + 2-oxoglutarate + O2 = a 2'-deoxycytidine in double-stranded DNA + formaldehyde + succinate + CO2 + H(+). The catalysed reaction is an N(3)-methyl-2'-deoxycytidine in single-stranded DNA + 2-oxoglutarate + O2 = a 2'-deoxycytidine in single-stranded DNA + formaldehyde + succinate + CO2 + H(+). The enzyme catalyses a 1,N(6)-etheno-2'-deoxyadenosine in double-stranded DNA + 2-oxoglutarate + O2 + H2O = a 2'-deoxyadenosine in double-stranded DNA + glyoxal + succinate + CO2. It catalyses the reaction a 1,N(6)-etheno-2'-deoxyadenosine in single-stranded DNA + 2-oxoglutarate + O2 + H2O = a 2'-deoxyadenosine in single-stranded DNA + glyoxal + succinate + CO2. It carries out the reaction a 3,N(4)-etheno-2'-deoxycytidine in double-stranded DNA + 2-oxoglutarate + O2 + H2O = a 2'-deoxycytidine in double-stranded DNA + glyoxal + succinate + CO2. The catalysed reaction is a 3,N(4)-etheno-2'-deoxycytidine in single-stranded DNA + 2-oxoglutarate + O2 + H2O = a 2'-deoxycytidine in single-stranded DNA + glyoxal + succinate + CO2. The enzyme catalyses a 1,N(2)-etheno-2'-deoxyguanosine in double-stranded DNA + 2-oxoglutarate + O2 + H2O = a 2'-deoxyguanosine in double-stranded DNA + glyoxal + succinate + CO2. Its activity is regulated as follows. Activated by ascorbate and magnesium ions. Functionally, dioxygenase that repairs alkylated nucleic acid bases by direct reversal oxidative dealkylation. Can process both double-stranded (ds) and single-stranded (ss) DNA substrates, with a strong preference for dsDNA. Uses molecular oxygen, 2-oxoglutarate and iron as cofactors to oxidize the alkyl groups that are subsequently released as aldehydes, regenerating the undamaged bases. Probes the base pair stability, locates a weakened base pair and flips the damaged base to accommodate the lesion in its active site for efficient catalysis. Repairs monoalkylated bases, specifically N1-methyladenine and N3-methylcytosine, as well as higher order alkyl adducts such as bases modified with exocyclic bridged adducts known as etheno adducts including 1,N6-ethenoadenine, 3,N4-ethenocytosine and 1,N2-ethenoguanine. Acts as a gatekeeper of genomic integrity under alkylation stress. Efficiently repairs alkylated lesions in ribosomal DNA (rDNA). These lesions can cause ss- and dsDNA strand breaks that severely impair rDNA transcription. In a response mechanism to DNA damage, associates with PCNA at replication forks to repair alkylated adducts prior to replication. In Bos taurus (Bovine), this protein is DNA oxidative demethylase ALKBH2 (ALKBH2).